The sequence spans 319 residues: Protein HEXIM1 (319 aa).

Over residues 1–22 (MELIKEETAPEDDSRGRQRDCR) the composition is skewed to basic and acidic residues. Disordered stretches follow at residues 1–111 (MELI…KKRR), 157–223 (LMEE…LQKD), 262–286 (NNWL…RVRE), and 299–319 (NELL…SQPS). Positions 24-35 (SVVSSKQVQRNQ) are enriched in polar residues. Over residues 49 to 61 (PMCRDRSDPEPRT) the composition is skewed to basic and acidic residues. Positions 97–111 (GKKKHRRRPSKKKRR) are enriched in basic residues. The span at 185 to 202 (TASEDENFEAEEDDEEEG) shows a compositional bias: acidic residues. Positions 203–216 (GGGSDGMGRPGQAG) are enriched in gly residues. Residues 240–306 (SKQELVREYL…ENNELLLKTP (67 aa)) adopt a coiled-coil conformation. Polar residues predominate over residues 306 to 319 (PASNEPGLNQSQPS).

Belongs to the HEXIM family. In terms of assembly, homooligomer and heterooligomer. Core component of the 7SK RNP complex.

Its subcellular location is the nucleus. The protein localises to the cytoplasm. Its function is as follows. Transcriptional regulator which functions as a general RNA polymerase II transcription inhibitor. Core component of the 7SK RNP complex: in cooperation with 7SK snRNA sequesters P-TEFb in a large inactive 7SK snRNP complex preventing RNA polymerase II phosphorylation and subsequent transcriptional elongation. Plays a role in the regulation of DNA virus-mediated innate immune response by assembling into the HDP-RNP complex, a complex that serves as a platform for IRF3 phosphorylation and subsequent innate immune response activation through the cGAS-STING pathway. This is Protein HEXIM1 (hexim1) from Danio rerio (Zebrafish).